A 154-amino-acid polypeptide reads, in one-letter code: RxLR effector protein PexRD24 (154 aa).

A signal peptide spans 1–22 (MHSSLLWLGAVVALLAVNNVTA). The short motif at 53 to 67 (RSLRAVETSEDEEER) is the RxLR-dEER element. K138 is a short sequence motif (PP1c-binding motif).

This sequence belongs to the RxLR effector family. As to quaternary structure, interacts with the potato PP1c family proteins PP1c-1, PP1c-2 and PP1c-3.

It is found in the secreted. Its subcellular location is the host nucleus. The protein resides in the host nucleoplasm. The protein localises to the host nucleolus. In terms of biological role, effector that interacts with isoforms of host protein phosphatase type 1c (PP1c), mimicking a regulatory subunit and causing their re-localization within the host nucleus. The holoenzymes formed with PP1c isoforms act to promote late blight by attenuating jasmonic acid (JA)- and salicylic acid (SA)-mediated transcriptional responses of the host plant. This is RxLR effector protein PexRD24 from Phytophthora infestans (strain T30-4) (Potato late blight agent).